The sequence spans 2894 residues: uncharacterized protein (2894 aa).

The chain crosses the membrane as a helical span at residues 8-28 (ISIFVFTILLLSNVSLGLNVS). PbH1 repeat units lie at residues 543-567 (EVRWYIENNTLYFYDDPIYGYDISL), 2085-2107 (NYPLYIDNLTINASGGYGISMLN), 2135-2156 (FGNITIYNITISSCNQGLVLYK), 2158-2180 (GNGIKLINSQIKNSVYEGVYSKN), 2201-2223 (ISSILVNNSLIYKNRYEGLLLEN), 2224-2244 (SSSSILNSNIMNNSIGIYLKE), 2245-2266 (NYISKIQKSNISYNAYGIEIVN), 2267-2289 (SSNVYINSSNIFNASTDGIAIFN), 2290-2311 (GENVSVENSLLYNNNYSILSYG), 2341-2363 (LNNLKLYNSSVLNSGSYGLFIYS), 2367-2389 (ASNVNISKSLINGSYKDGIYIYG), 2390-2419 (VNAINIVNNNITNNGLIGGDPAGSGIKISG), 2422-2444 (TKGVLILNNNISHNLGNGISLEG), 2455-2477 (VENNIISNNGIEENSGNGIYIGG), 2479-2501 (VENVSIFNNTIQYSDAQAILIQE), 2512-2542 (GTNISIINNTIQYNGLTVTIGNITAGITVGA), 2550-2582 (NGYIIIEGNKIINNNLCPNPTYGGKVGGIEVYG), 2589-2611 (SLEFNISKNIIANNSAYGILIGA), 2612-2633 (SKDINIINNTIFNNEKGITIPN), and 2638-2660 (PYNIIISKNSIYNNSLLGIDLDD).

The protein localises to the membrane. This is an uncharacterized protein from Methanocaldococcus jannaschii (strain ATCC 43067 / DSM 2661 / JAL-1 / JCM 10045 / NBRC 100440) (Methanococcus jannaschii).